The following is a 49-amino-acid chain: Large ribosomal subunit protein eL40 (49 aa).

It belongs to the eukaryotic ribosomal protein eL40 family.

The sequence is that of Large ribosomal subunit protein eL40 from Methanosarcina barkeri (strain Fusaro / DSM 804).